The chain runs to 180 residues: NAD(P)H-quinone oxidoreductase subunit I, chloroplastic (180 aa).

2 consecutive 4Fe-4S ferredoxin-type domains span residues 55-84 (GRIHFELDKCIACEVCVRVCPIDLPVVDWR) and 95-124 (LNYSIDFGICIFCGNCVEYCPTNCLSMTEE). Residues Cys-64, Cys-67, Cys-70, Cys-74, Cys-104, Cys-107, Cys-110, and Cys-114 each coordinate [4Fe-4S] cluster.

The protein belongs to the complex I 23 kDa subunit family. In terms of assembly, NDH is composed of at least 16 different subunits, 5 of which are encoded in the nucleus. [4Fe-4S] cluster is required as a cofactor.

The protein localises to the plastid. Its subcellular location is the chloroplast thylakoid membrane. The enzyme catalyses a plastoquinone + NADH + (n+1) H(+)(in) = a plastoquinol + NAD(+) + n H(+)(out). It carries out the reaction a plastoquinone + NADPH + (n+1) H(+)(in) = a plastoquinol + NADP(+) + n H(+)(out). Its function is as follows. NDH shuttles electrons from NAD(P)H:plastoquinone, via FMN and iron-sulfur (Fe-S) centers, to quinones in the photosynthetic chain and possibly in a chloroplast respiratory chain. The immediate electron acceptor for the enzyme in this species is believed to be plastoquinone. Couples the redox reaction to proton translocation, and thus conserves the redox energy in a proton gradient. This chain is NAD(P)H-quinone oxidoreductase subunit I, chloroplastic, found in Chloranthus spicatus (Chulantree).